A 235-amino-acid chain; its full sequence is Aspartate/glutamate leucyltransferase (235 aa).

It belongs to the R-transferase family. Bpt subfamily.

It localises to the cytoplasm. The enzyme catalyses N-terminal L-glutamyl-[protein] + L-leucyl-tRNA(Leu) = N-terminal L-leucyl-L-glutamyl-[protein] + tRNA(Leu) + H(+). It carries out the reaction N-terminal L-aspartyl-[protein] + L-leucyl-tRNA(Leu) = N-terminal L-leucyl-L-aspartyl-[protein] + tRNA(Leu) + H(+). In terms of biological role, functions in the N-end rule pathway of protein degradation where it conjugates Leu from its aminoacyl-tRNA to the N-termini of proteins containing an N-terminal aspartate or glutamate. This Stutzerimonas stutzeri (strain A1501) (Pseudomonas stutzeri) protein is Aspartate/glutamate leucyltransferase.